Reading from the N-terminus, the 397-residue chain is Sulfate adenylyltransferase (397 aa).

It belongs to the sulfate adenylyltransferase family.

It carries out the reaction sulfate + ATP + H(+) = adenosine 5'-phosphosulfate + diphosphate. The protein operates within sulfur metabolism; hydrogen sulfide biosynthesis; sulfite from sulfate: step 1/3. This Allochromatium vinosum (strain ATCC 17899 / DSM 180 / NBRC 103801 / NCIMB 10441 / D) (Chromatium vinosum) protein is Sulfate adenylyltransferase (sat).